We begin with the raw amino-acid sequence, 318 residues long: Acetyl-coenzyme A carboxylase carboxyl transferase subunit alpha (318 aa).

A CoA carboxyltransferase C-terminal domain is found at 34–295 (DIEDQISQLR…KQAIKKDLSE (262 aa)).

This sequence belongs to the AccA family. Acetyl-CoA carboxylase is a heterohexamer composed of biotin carboxyl carrier protein (AccB), biotin carboxylase (AccC) and two subunits each of ACCase subunit alpha (AccA) and ACCase subunit beta (AccD).

The protein resides in the cytoplasm. The enzyme catalyses N(6)-carboxybiotinyl-L-lysyl-[protein] + acetyl-CoA = N(6)-biotinyl-L-lysyl-[protein] + malonyl-CoA. The protein operates within lipid metabolism; malonyl-CoA biosynthesis; malonyl-CoA from acetyl-CoA: step 1/1. Component of the acetyl coenzyme A carboxylase (ACC) complex. First, biotin carboxylase catalyzes the carboxylation of biotin on its carrier protein (BCCP) and then the CO(2) group is transferred by the carboxyltransferase to acetyl-CoA to form malonyl-CoA. The polypeptide is Acetyl-coenzyme A carboxylase carboxyl transferase subunit alpha (Colwellia psychrerythraea (strain 34H / ATCC BAA-681) (Vibrio psychroerythus)).